The following is a 322-amino-acid chain: Delta-aminolevulinic acid dehydratase (322 aa).

Residues Cys120, Cys122, and Cys130 each coordinate Zn(2+). The active-site Schiff-base intermediate with substrate is Lys195. 2 residues coordinate 5-aminolevulinate: Arg205 and Arg217. Glu233 serves as a coordination point for Mg(2+). The Schiff-base intermediate with substrate role is filled by Lys248. The 5-aminolevulinate site is built by Ser274 and Tyr312.

The protein belongs to the ALAD family. In terms of assembly, homooctamer. The cofactor is Zn(2+).

It catalyses the reaction 2 5-aminolevulinate = porphobilinogen + 2 H2O + H(+). It participates in porphyrin-containing compound metabolism; protoporphyrin-IX biosynthesis; coproporphyrinogen-III from 5-aminolevulinate: step 1/4. Its function is as follows. Catalyzes an early step in the biosynthesis of tetrapyrroles. Binds two molecules of 5-aminolevulinate per subunit, each at a distinct site, and catalyzes their condensation to form porphobilinogen. The polypeptide is Delta-aminolevulinic acid dehydratase (hemB) (Archaeoglobus fulgidus (strain ATCC 49558 / DSM 4304 / JCM 9628 / NBRC 100126 / VC-16)).